Consider the following 229-residue polypeptide: Heptaprenylglyceryl phosphate synthase (229 aa).

K12 serves as a coordination point for sn-glycerol 1-phosphate. Positions 14 and 40 each coordinate Mg(2+). Sn-glycerol 1-phosphate contacts are provided by residues 159 to 164 (YIEYSG), G189, and 209 to 210 (GN).

This sequence belongs to the GGGP/HepGP synthase family. Group I subfamily. In terms of assembly, homodimer. Mg(2+) serves as cofactor.

The enzyme catalyses sn-glycerol 1-phosphate + all-trans-heptaprenyl diphosphate = 3-heptaprenyl-sn-glycero-1-phosphate + diphosphate. Its pathway is membrane lipid metabolism; glycerophospholipid metabolism. Functionally, prenyltransferase that catalyzes in vivo the transfer of the heptaprenyl moiety of heptaprenyl pyrophosphate (HepPP; 35 carbon atoms) to the C3 hydroxyl of sn-glycerol-1-phosphate (G1P), producing heptaprenylglyceryl phosphate (HepGP). This reaction is an ether-bond-formation step in the biosynthesis of archaea-type G1P-based membrane lipids found in Bacillales. The chain is Heptaprenylglyceryl phosphate synthase from Oceanobacillus iheyensis (strain DSM 14371 / CIP 107618 / JCM 11309 / KCTC 3954 / HTE831).